The following is a 101-amino-acid chain: Urease subunit beta (101 aa).

The protein belongs to the urease beta subunit family. In terms of assembly, heterotrimer of UreA (gamma), UreB (beta) and UreC (alpha) subunits. Three heterotrimers associate to form the active enzyme.

It is found in the cytoplasm. It carries out the reaction urea + 2 H2O + H(+) = hydrogencarbonate + 2 NH4(+). It participates in nitrogen metabolism; urea degradation; CO(2) and NH(3) from urea (urease route): step 1/1. The sequence is that of Urease subunit beta from Leptothrix cholodnii (strain ATCC 51168 / LMG 8142 / SP-6) (Leptothrix discophora (strain SP-6)).